The primary structure comprises 280 residues: Dermonecrotic toxin LgSicTox-alphaIA1 (280 aa).

His12 is an active-site residue. The Mg(2+) site is built by Glu32 and Asp34. His48 (nucleophile) is an active-site residue. Cys52 and Cys58 are disulfide-bonded. Asp92 is a binding site for Mg(2+).

Belongs to the arthropod phospholipase D family. Class I subfamily. The cofactor is Mg(2+). Expressed by the venom gland.

It is found in the secreted. It catalyses the reaction an N-(acyl)-sphingosylphosphocholine = an N-(acyl)-sphingosyl-1,3-cyclic phosphate + choline. The catalysed reaction is an N-(acyl)-sphingosylphosphoethanolamine = an N-(acyl)-sphingosyl-1,3-cyclic phosphate + ethanolamine. The enzyme catalyses a 1-acyl-sn-glycero-3-phosphocholine = a 1-acyl-sn-glycero-2,3-cyclic phosphate + choline. It carries out the reaction a 1-acyl-sn-glycero-3-phosphoethanolamine = a 1-acyl-sn-glycero-2,3-cyclic phosphate + ethanolamine. Dermonecrotic toxins cleave the phosphodiester linkage between the phosphate and headgroup of certain phospholipids (sphingolipid and lysolipid substrates), forming an alcohol (often choline) and a cyclic phosphate. This toxin acts on sphingomyelin (SM). It may also act on ceramide phosphoethanolamine (CPE), lysophosphatidylcholine (LPC) and lysophosphatidylethanolamine (LPE), but not on lysophosphatidylserine (LPS), and lysophosphatidylglycerol (LPG). It acts by transphosphatidylation, releasing exclusively cyclic phosphate products as second products. Induces dermonecrosis, hemolysis, increased vascular permeability, edema, inflammatory response, and platelet aggregation. This chain is Dermonecrotic toxin LgSicTox-alphaIA1, found in Loxosceles gaucho (Spider).